A 122-amino-acid chain; its full sequence is Photosystem II extrinsic protein U (122 aa).

A signal peptide spans 1 to 30; sequence MRWLLSILVRVVLVLCLCFAPLGIPVVARA.

It belongs to the PsbU family. PSII is composed of 1 copy each of membrane proteins PsbA, PsbB, PsbC, PsbD, PsbE, PsbF, PsbH, PsbI, PsbJ, PsbK, PsbL, PsbM, PsbT, PsbX, PsbY, PsbZ, Psb30/Ycf12, peripheral proteins PsbO, CyanoQ (PsbQ), PsbU, PsbV and a large number of cofactors. It forms dimeric complexes.

The protein resides in the cellular thylakoid membrane. One of the extrinsic, lumenal subunits of photosystem II (PSII). PSII is a light-driven water plastoquinone oxidoreductase, using light energy to abstract electrons from H(2)O, generating a proton gradient subsequently used for ATP formation. The extrinsic proteins stabilize the structure of photosystem II oxygen-evolving complex (OEC), the ion environment of oxygen evolution and protect the OEC against heat-induced inactivation. This Synechococcus sp. (strain JA-2-3B'a(2-13)) (Cyanobacteria bacterium Yellowstone B-Prime) protein is Photosystem II extrinsic protein U.